We begin with the raw amino-acid sequence, 160 residues long: Small ribosomal subunit protein uS9 (160 aa).

It belongs to the universal ribosomal protein uS9 family.

The protein is Small ribosomal subunit protein uS9 of Mesorhizobium japonicum (strain LMG 29417 / CECT 9101 / MAFF 303099) (Mesorhizobium loti (strain MAFF 303099)).